We begin with the raw amino-acid sequence, 284 residues long: uncharacterized protein (284 aa).

Residues 236–284 (IDITNEADSSEIIDSEPSNKDETEKPSAQETDPFDGKPVDIKDDELPFD) are disordered. Basic and acidic residues-rich tracts occupy residues 252-262 (PSNKDETEKPS) and 269-284 (FDGKPVDIKDDELPFD).

This is an uncharacterized protein from Bacillus subtilis (strain 168).